The chain runs to 325 residues: Biotin synthase (325 aa).

A Radical SAM core domain is found at 49–278; sequence FNGNIVDLCS…KASIRLAGGR (230 aa). Residues Cys-67, Cys-71, and Cys-74 each contribute to the [4Fe-4S] cluster site. Residues Ser-111, Cys-143, Cys-203, and Arg-273 each contribute to the [2Fe-2S] cluster site.

It belongs to the radical SAM superfamily. Biotin synthase family. As to quaternary structure, homodimer. [4Fe-4S] cluster is required as a cofactor. [2Fe-2S] cluster serves as cofactor.

The enzyme catalyses (4R,5S)-dethiobiotin + (sulfur carrier)-SH + 2 reduced [2Fe-2S]-[ferredoxin] + 2 S-adenosyl-L-methionine = (sulfur carrier)-H + biotin + 2 5'-deoxyadenosine + 2 L-methionine + 2 oxidized [2Fe-2S]-[ferredoxin]. It participates in cofactor biosynthesis; biotin biosynthesis; biotin from 7,8-diaminononanoate: step 2/2. In terms of biological role, catalyzes the conversion of dethiobiotin (DTB) to biotin by the insertion of a sulfur atom into dethiobiotin via a radical-based mechanism. This is Biotin synthase from Clostridium tetani (strain Massachusetts / E88).